A 218-amino-acid chain; its full sequence is Thiopurine S-methyltransferase (218 aa).

Positions 10, 45, 66, and 123 each coordinate S-adenosyl-L-methionine.

It belongs to the class I-like SAM-binding methyltransferase superfamily. TPMT family.

The protein localises to the cytoplasm. It catalyses the reaction S-adenosyl-L-methionine + a thiopurine = S-adenosyl-L-homocysteine + a thiopurine S-methylether.. The protein is Thiopurine S-methyltransferase of Shewanella amazonensis (strain ATCC BAA-1098 / SB2B).